Consider the following 452-residue polypeptide: Molybdate-anion transporter (452 aa).

A run of 12 helical transmembrane segments spans residues M1–F21, Y45–L65, I79–P99, F130–F150, N180–L200, G201–I221, V251–L271, T281–Y301, V316–A336, L346–L366, I377–V397, and M410–T430.

The protein belongs to the major facilitator superfamily.

It is found in the cell membrane. Functionally, mediates high-affinity intracellular uptake of the rare oligo-element molybdenum. In Xenopus tropicalis (Western clawed frog), this protein is Molybdate-anion transporter (mfsd5).